Here is a 1515-residue protein sequence, read N- to C-terminus: Neurite extension and migration factor (1515 aa).

Basic and acidic residues predominate over residues 381-405; that stretch reads DKKKGKEEVHEDKSIETKDEKDNGE. Disordered stretches follow at residues 381-415, 505-529, 731-774, 1158-1225, 1372-1422, and 1435-1479; these read DKKKGKEEVHEDKSIETKDEKDNGEKPALNNKPCG, VNERKEWPPGGSKEEDDDEWCPKKR, KKIK…HMSE, FDEP…TKKG, TPQE…EDSR, and TLGN…AGTT. Polar residues-rich tracts occupy residues 746-757 and 763-772; these read SPVSEDTSSKAN and TPGTSNSSHM. Residues 1180 to 1193 are compositionally biased toward low complexity; the sequence is PGKSGAVSQSSSQK. The span at 1442–1452 shows a compositional bias: basic residues; it reads THKKLYRHKSS. The segment covering 1455 to 1479 has biased composition (basic and acidic residues); the sequence is GLRDEKYKGKRVEREQAHKDEAGTT.

Expressed in the brain, particularly during the late embryonic and perinatal stages of development. In the developing brain, it is expressed only in the cortical plate and subplate region but not in the intermediate or ventricular zone.

It is found in the nucleus. The protein localises to the cytoplasm. Functionally, involved in neurite outgrowth by regulating cell-cell adhesion via the N-cadherin signaling pathway. May act by regulating expression of protein-coding genes, such as N-cadherins and integrin beta-1 (ITGB1). This chain is Neurite extension and migration factor, found in Mus musculus (Mouse).